The chain runs to 510 residues: D-allose import ATP-binding protein AlsA (510 aa).

2 ABC transporter domains span residues 6-245 and 260-509; these read ISMA…VGRE and LAHE…ALPQ. An ATP-binding site is contributed by 38 to 45; it reads GENGAGKS.

This sequence belongs to the ABC transporter superfamily. D-allose importer (TC 3.A.1.2.6) family. In terms of assembly, the complex is composed of two ATP-binding proteins (AlsA), two transmembrane proteins (AlsC) and a solute-binding protein (AlsB).

It is found in the cell inner membrane. The enzyme catalyses D-allose(out) + ATP + H2O = D-allose(in) + ADP + phosphate + H(+). Part of the ABC transporter complex AlsBAC involved in D-allose import. Probably responsible for energy coupling to the transport system. The sequence is that of D-allose import ATP-binding protein AlsA (alsA) from Escherichia coli (strain K12).